The chain runs to 288 residues: 2-methoxy-6-polyprenyl-1,4-benzoquinol methylase, mitochondrial (288 aa).

S-adenosyl-L-methionine-binding residues include Thr-68, Asp-102, and Ser-146. Residues 260-270 (PITPTTSSDIP) show a composition bias toward low complexity. Residues 260 to 288 (PITPTTSSDIPAQNTSEATCEVKPEPNSA) form a disordered region. Residues 279-288 (CEVKPEPNSA) are compositionally biased toward basic and acidic residues.

This sequence belongs to the class I-like SAM-binding methyltransferase superfamily. MenG/UbiE family. As to quaternary structure, component of a multi-subunit COQ enzyme complex.

The protein resides in the mitochondrion inner membrane. The enzyme catalyses a 2-methoxy-6-(all-trans-polyprenyl)benzene-1,4-diol + S-adenosyl-L-methionine = a 5-methoxy-2-methyl-3-(all-trans-polyprenyl)benzene-1,4-diol + S-adenosyl-L-homocysteine + H(+). It functions in the pathway cofactor biosynthesis; ubiquinone biosynthesis. Its function is as follows. Methyltransferase required for the conversion of 2-polyprenyl-6-methoxy-1,4-benzoquinol (DDMQH2) to 2-polyprenyl-3-methyl-6-methoxy-1,4-benzoquinol (DMQH2). This Leishmania donovani protein is 2-methoxy-6-polyprenyl-1,4-benzoquinol methylase, mitochondrial.